The primary structure comprises 223 residues: Endonuclease V (223 aa).

Residues aspartate 35 and aspartate 103 each coordinate Mg(2+).

Belongs to the endonuclease V family. Requires Mg(2+) as cofactor.

The protein resides in the cytoplasm. The enzyme catalyses Endonucleolytic cleavage at apurinic or apyrimidinic sites to products with a 5'-phosphate.. Functionally, DNA repair enzyme involved in the repair of deaminated bases. Selectively cleaves double-stranded DNA at the second phosphodiester bond 3' to a deoxyinosine leaving behind the intact lesion on the nicked DNA. The protein is Endonuclease V of Salmonella schwarzengrund (strain CVM19633).